The following is a 96-amino-acid chain: Aspartyl/glutamyl-tRNA(Asn/Gln) amidotransferase subunit C (96 aa).

It belongs to the GatC family. As to quaternary structure, heterotrimer of A, B and C subunits.

It catalyses the reaction L-glutamyl-tRNA(Gln) + L-glutamine + ATP + H2O = L-glutaminyl-tRNA(Gln) + L-glutamate + ADP + phosphate + H(+). The enzyme catalyses L-aspartyl-tRNA(Asn) + L-glutamine + ATP + H2O = L-asparaginyl-tRNA(Asn) + L-glutamate + ADP + phosphate + 2 H(+). In terms of biological role, allows the formation of correctly charged Asn-tRNA(Asn) or Gln-tRNA(Gln) through the transamidation of misacylated Asp-tRNA(Asn) or Glu-tRNA(Gln) in organisms which lack either or both of asparaginyl-tRNA or glutaminyl-tRNA synthetases. The reaction takes place in the presence of glutamine and ATP through an activated phospho-Asp-tRNA(Asn) or phospho-Glu-tRNA(Gln). In Bacillus velezensis (strain DSM 23117 / BGSC 10A6 / LMG 26770 / FZB42) (Bacillus amyloliquefaciens subsp. plantarum), this protein is Aspartyl/glutamyl-tRNA(Asn/Gln) amidotransferase subunit C.